The primary structure comprises 454 residues: uncharacterized protein (454 aa).

Residues 364–405 enclose the HNH domain; it reads CSRPGCDAPAYHSEVHHVTPWTTTHRTDINDLTLACGPDNRL.

It belongs to the Rv1128c/1148c/1588c/1702c/1945/3466 family.

This is an uncharacterized protein from Mycobacterium tuberculosis (strain ATCC 25618 / H37Rv).